Here is a 166-residue protein sequence, read N- to C-terminus: Putative transcriptional regulatory protein for hcr operon (166 aa).

The HTH marR-type domain occupies 1 to 155 (MRKHRGKPAN…LIGLLKRLYR (155 aa)).

May be involved in the regulation of genes for 4-hydroxybenzoyl-CoA reductase. This chain is Putative transcriptional regulatory protein for hcr operon, found in Thauera aromatica.